The following is a 95-amino-acid chain: MSLTHQDVARIAKLARINVSEAEIAATADQLNNIFGLIEKMQAVDTAGIEPMAHPQDVSLRLRDDVVTEPNRREAFQAVAPQVEKGLFLVPKVIE.

Belongs to the GatC family. Heterotrimer of A, B and C subunits.

The enzyme catalyses L-glutamyl-tRNA(Gln) + L-glutamine + ATP + H2O = L-glutaminyl-tRNA(Gln) + L-glutamate + ADP + phosphate + H(+). It catalyses the reaction L-aspartyl-tRNA(Asn) + L-glutamine + ATP + H2O = L-asparaginyl-tRNA(Asn) + L-glutamate + ADP + phosphate + 2 H(+). In terms of biological role, allows the formation of correctly charged Asn-tRNA(Asn) or Gln-tRNA(Gln) through the transamidation of misacylated Asp-tRNA(Asn) or Glu-tRNA(Gln) in organisms which lack either or both of asparaginyl-tRNA or glutaminyl-tRNA synthetases. The reaction takes place in the presence of glutamine and ATP through an activated phospho-Asp-tRNA(Asn) or phospho-Glu-tRNA(Gln). The chain is Aspartyl/glutamyl-tRNA(Asn/Gln) amidotransferase subunit C from Chromobacterium violaceum (strain ATCC 12472 / DSM 30191 / JCM 1249 / CCUG 213 / NBRC 12614 / NCIMB 9131 / NCTC 9757 / MK).